Consider the following 65-residue polypeptide: DNA-directed RNA polymerase subunit Rpo10 (65 aa).

The Zn(2+) site is built by cysteine 7, cysteine 10, cysteine 44, and cysteine 45.

Belongs to the archaeal Rpo10/eukaryotic RPB10 RNA polymerase subunit family. In terms of assembly, part of the RNA polymerase complex. The cofactor is Zn(2+).

It is found in the cytoplasm. The catalysed reaction is RNA(n) + a ribonucleoside 5'-triphosphate = RNA(n+1) + diphosphate. In terms of biological role, DNA-dependent RNA polymerase (RNAP) catalyzes the transcription of DNA into RNA using the four ribonucleoside triphosphates as substrates. The polypeptide is DNA-directed RNA polymerase subunit Rpo10 (Pyrococcus furiosus (strain ATCC 43587 / DSM 3638 / JCM 8422 / Vc1)).